The following is a 185-amino-acid chain: Elongation factor P (185 aa).

This sequence belongs to the elongation factor P family.

Its subcellular location is the cytoplasm. It functions in the pathway protein biosynthesis; polypeptide chain elongation. In terms of biological role, involved in peptide bond synthesis. Stimulates efficient translation and peptide-bond synthesis on native or reconstituted 70S ribosomes in vitro. Probably functions indirectly by altering the affinity of the ribosome for aminoacyl-tRNA, thus increasing their reactivity as acceptors for peptidyl transferase. The protein is Elongation factor P (efp) of Lactococcus lactis subsp. lactis (strain IL1403) (Streptococcus lactis).